The chain runs to 185 residues: Ribosome-recycling factor (185 aa).

The protein belongs to the RRF family.

The protein resides in the cytoplasm. Its function is as follows. Responsible for the release of ribosomes from messenger RNA at the termination of protein biosynthesis. May increase the efficiency of translation by recycling ribosomes from one round of translation to another. The protein is Ribosome-recycling factor of Saccharophagus degradans (strain 2-40 / ATCC 43961 / DSM 17024).